A 131-amino-acid polypeptide reads, in one-letter code: MRHRHGLRKLNRTSSHRLAMLRNMTVSLLRHEAIKTTLPKAKELRRVIEPILTLGKTDSLANKRLAFNRLRDREMVVKLFAELGPRYANRNGGYLRILKMGFRVGDNAPMAFVELVDRPDTTEAVEDNSGE.

The protein belongs to the bacterial ribosomal protein bL17 family. Part of the 50S ribosomal subunit. Contacts protein L32.

The chain is Large ribosomal subunit protein bL17 from Janthinobacterium sp. (strain Marseille) (Minibacterium massiliensis).